A 186-amino-acid chain; its full sequence is ADP-ribosylation factor-like protein 6 (186 aa).

A lipid anchor (N-myristoyl glycine) is attached at Gly-2. GTP-binding positions include 24-31, Thr-50, 69-73, Gly-72, 130-133, and Ala-164; these read GLDNSGKT, DMSGQ, and NKMD. Thr-50 provides a ligand contact to Mg(2+).

Belongs to the small GTPase superfamily. Arf family. As to quaternary structure, interacts with SEC61B, ARL6IP1, ARL6IP2, ARL6IP3, ARL6IP4 ARL6IP5 and ARL6IP6. Interacts (GTP-bound form) with the BBSome a complex that contains BBS1, BBS2, BBS4, BBS5, BBS7, BBS8/TTC8, BBS9 and BBIP10. Interacts (GTP-free form) with IFT27.

The protein localises to the cell projection. The protein resides in the cilium membrane. It localises to the cytoplasm. It is found in the cytoskeleton. Its subcellular location is the cilium axoneme. The protein localises to the cilium basal body. In terms of biological role, involved in membrane protein trafficking at the base of the ciliary organelle. Mediates recruitment onto plasma membrane of the BBSome complex which would constitute a coat complex required for sorting of specific membrane proteins to the primary cilia. Together with the BBSome complex and LTZL1, controls SMO ciliary trafficking and contributes to the sonic hedgehog (SHH) pathway regulation. May regulate cilia assembly and disassembly and subsequent ciliary signaling events such as the Wnt signaling cascade. Isoform 2 may be required for proper retinal function and organization. The protein is ADP-ribosylation factor-like protein 6 (ARL6) of Pongo abelii (Sumatran orangutan).